A 619-amino-acid chain; its full sequence is ATP-dependent zinc metalloprotease FtsH 1 (619 aa).

The Cytoplasmic segment spans residues 1–8 (MADEKRPA). The helical transmembrane segment at 9–29 (SRAWLGYLLIAVGILVLSGIV) threads the bilayer. Over 30–108 (RSRGRPLVPY…RIEAKSPQTS (79 aa)) the chain is Periplasmic. Residues 109 to 129 (VWMQVAIWMLPLVLINAAFFM) form a helical membrane-spanning segment. Residues 130-619 (MLRRAGQGAG…KIAVGPPSAA (490 aa)) are Cytoplasmic-facing. 203-210 (GPPGTGKT) is a binding site for ATP. Residue H426 participates in Zn(2+) binding. Residue E427 is part of the active site. Zn(2+) contacts are provided by H430 and D503.

The protein in the central section; belongs to the AAA ATPase family. In the C-terminal section; belongs to the peptidase M41 family. As to quaternary structure, homohexamer. It depends on Zn(2+) as a cofactor.

The protein localises to the cell inner membrane. Functionally, acts as a processive, ATP-dependent zinc metallopeptidase for both cytoplasmic and membrane proteins. Plays a role in the quality control of integral membrane proteins. This Sorangium cellulosum (strain So ce56) (Polyangium cellulosum (strain So ce56)) protein is ATP-dependent zinc metalloprotease FtsH 1.